Reading from the N-terminus, the 161-residue chain is ATP synthase subunit b (161 aa).

Residues 2 to 22 form a helical membrane-spanning segment; the sequence is VIEWGTALYQLLAFAVLLLIL.

It belongs to the ATPase B chain family. F-type ATPases have 2 components, F(1) - the catalytic core - and F(0) - the membrane proton channel. F(1) has five subunits: alpha(3), beta(3), gamma(1), delta(1), epsilon(1). F(0) has three main subunits: a(1), b(2) and c(10-14). The alpha and beta chains form an alternating ring which encloses part of the gamma chain. F(1) is attached to F(0) by a central stalk formed by the gamma and epsilon chains, while a peripheral stalk is formed by the delta and b chains.

It localises to the cell membrane. Its function is as follows. F(1)F(0) ATP synthase produces ATP from ADP in the presence of a proton or sodium gradient. F-type ATPases consist of two structural domains, F(1) containing the extramembraneous catalytic core and F(0) containing the membrane proton channel, linked together by a central stalk and a peripheral stalk. During catalysis, ATP synthesis in the catalytic domain of F(1) is coupled via a rotary mechanism of the central stalk subunits to proton translocation. Functionally, component of the F(0) channel, it forms part of the peripheral stalk, linking F(1) to F(0). This chain is ATP synthase subunit b, found in Shouchella clausii (strain KSM-K16) (Alkalihalobacillus clausii).